Consider the following 143-residue polypeptide: Submaxillary gland androgen-regulated protein 2, isoform gamma (143 aa).

A signal peptide spans 1-22 (MKALYMVFVLWVLIGCFLSSEC). A disordered region spans residues 28-50 (GQHDPTRPLSPSNPSSHFYPQPD). A compositionally biased stretch (polar residues) spans 36–45 (LSPSNPSSHF).

It localises to the secreted. May play a role in protection or detoxification. The sequence is that of Submaxillary gland androgen-regulated protein 2, isoform gamma (Smr2) from Mus musculus (Mouse).